Consider the following 458-residue polypeptide: Transcription factor PCF5 (458 aa).

Disordered regions lie at residues 1-103 (MGDA…RGPR), 159-182 (GAGA…ENSD), 278-299 (MFHH…TTQQ), and 424-458 (RLPA…ASHH). A compositionally biased stretch (gly residues) spans 65-74 (RGGGGGGGGE). The TCP domain occupies 89–147 (RKDRHSKVCTARGPRDRRVRLSAHTAIQFYDVQDRLGYDRPSKAVDWLIKNAKDAIDKL).

As to quaternary structure, forms homodimers and heterodimers.

Its subcellular location is the nucleus. Functionally, transcription activator. Binds the promoter core sequence 5'-GGNCC-3'. The polypeptide is Transcription factor PCF5 (PCF5) (Oryza sativa subsp. japonica (Rice)).